A 367-amino-acid polypeptide reads, in one-letter code: Heparan sulfate glucosamine 3-O-sulfotransferase 2 (367 aa).

The Cytoplasmic segment spans residues 1–19; the sequence is MAYRVLGRAGPPQPRRARR. Residues 20-39 form a helical; Signal-anchor for type II membrane protein membrane-spanning segment; the sequence is LLFAFTLSLSCTYLCYSFLC. The Lumenal segment spans residues 40-367; that stretch reads CCDGLGQSRL…ETVGQDFRWE (328 aa). Residues 66–115 form a disordered region; the sequence is LLAKSRPCDPPGPTPSEPSAPSAPAAAAPAPRLSGSNHSGSPKPGTKRLP. Positions 73–83 are enriched in pro residues; the sequence is CDPPGPTPSEP. The segment covering 84–96 has biased composition (low complexity); it reads SAPSAPAAAAPAP. Asn-102 carries N-linked (GlcNAc...) asparagine glycosylation. Residue 124–128 coordinates 3'-phosphoadenylyl sulfate; it reads KGGTR. Substrate-binding positions include 146 to 152 and 177 to 180; these read EPHFFDR and KTPS. N-linked (GlcNAc...) asparagine glycosylation is present at Asn-193. 3'-phosphoadenylyl sulfate-binding residues include Arg-205 and Ser-213. Residue Asn-235 is glycosylated (N-linked (GlcNAc...) asparagine). 245–246 is a binding site for substrate; it reads WN. Residue Asn-306 is glycosylated (N-linked (GlcNAc...) asparagine). Cys-313 and Cys-325 are joined by a disulfide. 330–334 contacts 3'-phosphoadenylyl sulfate; the sequence is KGRTH.

The protein belongs to the sulfotransferase 1 family.

The protein localises to the golgi apparatus membrane. The catalysed reaction is alpha-D-glucosaminyl-[heparan sulfate](n) + 3'-phosphoadenylyl sulfate = 3-sulfo-alpha-D-glucosaminyl-[heparan sulfate](n) + adenosine 3',5'-bisphosphate + H(+). Sulfotransferase that utilizes 3'-phospho-5'-adenylyl sulfate (PAPS) to catalyze the transfer of a sulfo group to an N-unsubstituted glucosamine linked to a 2-O-sulfo iduronic acid unit on heparan sulfate. Catalyzes the O-sulfation of glucosamine in GlcA2S-GlcNS. Unlike HS3ST1/3-OST-1, does not convert non-anticoagulant heparan sulfate to anticoagulant heparan sulfate. The polypeptide is Heparan sulfate glucosamine 3-O-sulfotransferase 2 (Hs3st2) (Mus musculus (Mouse)).